Here is a 216-residue protein sequence, read N- to C-terminus: Phosphorylated carbohydrates phosphatase TM_1254 (216 aa).

Residue Asp-7 is the Nucleophile of the active site.

It belongs to the HAD-like hydrolase superfamily. Co(2+) serves as cofactor. Requires Mg(2+) as cofactor. Mn(2+) is required as a cofactor. The cofactor is Ni(2+).

In terms of biological role, displays high phosphatase activity toward erythrose 4-phosphate, fructose 6-phosphate, 2-deoxyglucose 6-phosphate, and mannose 6-phosphate. May have a role in the intracellular metabolism of many phosphorylated carbohydrates. The sequence is that of Phosphorylated carbohydrates phosphatase TM_1254 from Thermotoga maritima (strain ATCC 43589 / DSM 3109 / JCM 10099 / NBRC 100826 / MSB8).